The following is a 456-amino-acid chain: Protein shifted (456 aa).

The first 30 residues, 1–30, serve as a signal peptide directing secretion; the sequence is MTHQGIGCLVKWLYLVLIVHTLLCIGQLEC. Residues 34–112 are disordered; sequence HHNRNNNNNN…GGGGSRHNRN (79 aa). A compositionally biased stretch (basic and acidic residues) spans 44–55; the sequence is RRADSSSSEEGH. A glycan (N-linked (GlcNAc...) asparagine) is linked at Asn57. A compositionally biased stretch (basic residues) spans 77-87; sequence HQPRRGQRKKQ. Positions 88-107 are enriched in gly residues; that stretch reads QGGGGGGSGGGGGNGGGGGS. The 143-residue stretch at 119 to 261 folds into the WIF domain; it reads LWINEQQLKM…PIRLNFKKEC (143 aa). 3 N-linked (GlcNAc...) asparagine glycosylation sites follow: Asn173, Asn217, and Asn227. 16 disulfides stabilise this stretch: Cys224–Cys261, Cys283–Cys293, Cys287–Cys299, Cys301–Cys310, Cys315–Cys325, Cys319–Cys331, Cys333–Cys342, Cys347–Cys357, Cys351–Cys363, Cys365–Cys374, Cys379–Cys389, Cys383–Cys395, Cys397–Cys406, Cys416–Cys423, Cys418–Cys429, and Cys431–Cys440. EGF-like domains lie at 279–311, 315–342, 343–375, 376–407, and 412–441; these read TLQE…QYCE, CFPQ…GTQC, EGGI…LRCE, YSKC…DHCE, and QRSI…RHCN. N-linked (GlcNAc...) asparagine glycosylation occurs at Asn324. Asn420 is a glycosylation site (N-linked (GlcNAc...) asparagine).

As to quaternary structure, interacts with hh. At the blastoderm stage, it is ubiquitously expressed. As embryogenesis continues, it is expressed in the epidermis and central nervous system, this expression being segmentally modulated. Also highly expressed at the foregut and hindgut throughout embryogenesis. In third instar wing imaginal disks, it is highly expressed in the most anterior and posterior parts of the disk and weakly expressed at the antero/posterior (A/P) compartment border. In the leg disks and the antenna part of the eye-antennal imaginal disk it is also weakly expressed at the A/P compartment border. Weakly expressed in the morphogenetic furrow in the eye primordium.

The protein localises to the secreted. It localises to the extracellular space. It is found in the extracellular matrix. In terms of biological role, required for normal accumulation and movement of lipid-modified hedgehog (hh) morphogen. May act by stabilizing the interaction between heparan sulfate proteoglycans (HSPGs) and hh, HSPGs being required for diffusion of hh morphogen. Not involved in wingless (wg) morphogen movement, suggesting that it may provide HSPG specificity for Hh. This Drosophila melanogaster (Fruit fly) protein is Protein shifted (shf).